We begin with the raw amino-acid sequence, 338 residues long: Serine/threonine-protein kinase YabT (338 aa).

The Protein kinase domain maps to 28 to 286 (YTLRKQLGKG…PIKASPQPAT (259 aa)). ATP-binding positions include 34-42 (LGKGANGIV) and K55. D148 acts as the Proton acceptor in catalysis. The segment at 266–312 (DAGQKAAQRKQPIKASPQPATRQRQQKPRQGKITKTRYTPKQKPAKS) is disordered. Over residues 289-309 (RQQKPRQGKITKTRYTPKQKP) the composition is skewed to basic residues.

This sequence belongs to the protein kinase superfamily. Ser/Thr protein kinase family. In terms of processing, autophosphorylated.

The catalysed reaction is L-seryl-[protein] + ATP = O-phospho-L-seryl-[protein] + ADP + H(+). It catalyses the reaction L-threonyl-[protein] + ATP = O-phospho-L-threonyl-[protein] + ADP + H(+). Plays a role in the cell's commitment to sporulation; phosphorylates DNA replication initiation-control protein YabA. Deletion of this kinase delays entry into sporulation but does not affect final spore yield. Overexpression decreases biofilm formation; phosphorylation of YabA probably prevents biofilm formation. This chain is Serine/threonine-protein kinase YabT (yabT), found in Bacillus subtilis (strain 168).